A 270-amino-acid chain; its full sequence is Phosphatidylinositol transfer protein alpha isoform (270 aa).

Residues T58, K60, E85, N89, T96, and K194 each coordinate a 1,2-diacyl-sn-glycero-3-phospho-(1D-myo-inositol). At K215 the chain carries N6-acetyllysine.

This sequence belongs to the PtdIns transfer protein family. PI transfer class I subfamily. In terms of processing, phosphorylated by PKC in a calcium and phosphatidylserine-dependent manner.

It localises to the cytoplasm. The protein resides in the nucleus. The enzyme catalyses a 1,2-diacyl-sn-glycero-3-phosphocholine(in) = a 1,2-diacyl-sn-glycero-3-phosphocholine(out). The catalysed reaction is a 1,2-diacyl-sn-glycero-3-phospho-(1D-myo-inositol)(in) = a 1,2-diacyl-sn-glycero-3-phospho-(1D-myo-inositol)(out). Functionally, catalyzes the transfer of phosphatidylinositol (PI) and phosphatidylcholine (PC) between membranes. Shows a preference for PI and PC containing shorter saturated or monosaturated acyl chains at the sn-1 and sn-2 positions. Preference order for PC is C16:1 &gt; C16:0 &gt; C18:1 &gt; C18:0 &gt; C20:4 and for PI is C16:1 &gt; C16:0 &gt; C18:1 &gt; C18:0 &gt; C20:4 &gt; C20:3. This chain is Phosphatidylinositol transfer protein alpha isoform (PITPNA), found in Bos taurus (Bovine).